A 1024-amino-acid polypeptide reads, in one-letter code: Probable alpha-mannosidase At5g13980 (1024 aa).

An N-terminal signal peptide occupies residues 1 to 21 (MDLAKFLCWIVLLLGISLVES). A glycan (N-linked (GlcNAc...) asparagine) is linked at Asn-27. Zn(2+) contacts are provided by His-46 and Asp-48. An N-linked (GlcNAc...) asparagine glycan is attached at Asn-63. Zn(2+) is bound at residue Asp-168. N-linked (GlcNAc...) asparagine glycosylation is present at Asn-278. His-410 lines the Zn(2+) pocket. A disulfide bridge connects residues Cys-461 and Cys-469. N-linked (GlcNAc...) asparagine glycans are attached at residues Asn-465, Asn-475, Asn-637, Asn-658, Asn-733, and Asn-823. Cys-827 and Cys-832 are disulfide-bonded.

The protein belongs to the glycosyl hydrolase 38 family. As to quaternary structure, homodimer. Requires Zn(2+) as cofactor.

It carries out the reaction Hydrolysis of terminal, non-reducing alpha-D-mannose residues in alpha-D-mannosides.. Liberates mannose from p-nitrophenyl-alpha-D-mannoside in vitro. The chain is Probable alpha-mannosidase At5g13980 from Arabidopsis thaliana (Mouse-ear cress).